The chain runs to 152 residues: Acidic phospholipase A2 S17-58 (152 aa).

The signal sequence occupies residues Met-1 to Ala-19. Positions Ser-20–Leu-27 are excised as a propeptide. 7 disulfides stabilise this stretch: Cys-38/Cys-104, Cys-54/Cys-151, Cys-56/Cys-72, Cys-71/Cys-132, Cys-78/Cys-125, Cys-88/Cys-118, and Cys-111/Cys-123. 3 residues coordinate Ca(2+): Tyr-55, Gly-57, and Gly-59. His-75 is a catalytic residue. Residue Asp-76 coordinates Ca(2+). Residue Asp-126 is part of the active site.

Belongs to the phospholipase A2 family. Group I subfamily. D49 sub-subfamily. Ca(2+) serves as cofactor. As to expression, expressed by the venom gland.

The protein resides in the secreted. It catalyses the reaction a 1,2-diacyl-sn-glycero-3-phosphocholine + H2O = a 1-acyl-sn-glycero-3-phosphocholine + a fatty acid + H(+). Snake venom phospholipase A2 (PLA2) that inhibits collagen-induced platelet aggregation. PLA2 catalyzes the calcium-dependent hydrolysis of the 2-acyl groups in 3-sn-phosphoglycerides. The chain is Acidic phospholipase A2 S17-58 from Austrelaps superbus (Lowland copperhead snake).